A 622-amino-acid chain; its full sequence is Probable E3 ubiquitin-protein ligase DTX2 (622 aa).

2 consecutive WWE domains span residues 8–97 (SLVQ…AVRR) and 98–174 (HLFP…SVRR). 3 positions are modified to asymmetric dimethylarginine: arginine 213, arginine 215, and arginine 233. At lysine 249 the chain carries N6-acetyllysine. Disordered regions lie at residues 249–324 (KPSL…VPMQ) and 355–393 (APQP…EPEP). Omega-N-methylarginine is present on arginine 256. The span at 274–285 (LGSQPLYRSSLS) shows a compositional bias: polar residues. Positions 299–322 (SGAVSASLPSGPSSSPGSVPATVP) are enriched in low complexity. Serine 360 is modified (phosphoserine). A compositionally biased stretch (basic residues) spans 372-381 (GSVKRLRKMS). An RING-type zinc finger spans residues 412-473 (CIICMEKLST…DGSLQCPSCK (62 aa)).

Belongs to the Deltex family. As to quaternary structure, homodimer. May form a heterodimer with other members of the Deltex family. Interacts with NOTCH1.

It is found in the cytoplasm. The protein resides in the nucleus. It carries out the reaction S-ubiquitinyl-[E2 ubiquitin-conjugating enzyme]-L-cysteine + [acceptor protein]-L-lysine = [E2 ubiquitin-conjugating enzyme]-L-cysteine + N(6)-ubiquitinyl-[acceptor protein]-L-lysine.. The protein operates within protein modification; protein ubiquitination. Its function is as follows. Regulator of Notch signaling, a signaling pathway involved in cell-cell communications that regulates a broad spectrum of cell-fate determinations. Probably acts both as a positive and negative regulator of Notch, depending on the developmental and cell context. Mediates the antineural activity of Notch, possibly by inhibiting the transcriptional activation mediated by MATCH1. Functions as a ubiquitin ligase protein in vitro, suggesting that it may regulate the Notch pathway via some ubiquitin ligase activity. The polypeptide is Probable E3 ubiquitin-protein ligase DTX2 (DTX2) (Homo sapiens (Human)).